A 317-amino-acid chain; its full sequence is Tyrosine--tRNA ligase (317 aa).

Y33 serves as a coordination point for L-tyrosine. Residues 38-46 carry the 'HIGH' region motif; the sequence is PSGKIHMGH. The L-tyrosine site is built by Y155, Q159, D162, and Q177. Residues 211–215 carry the 'KMSKS' region motif; it reads KMASS. S214 lines the ATP pocket.

Belongs to the class-I aminoacyl-tRNA synthetase family. TyrS type 3 subfamily. Homodimer.

Its subcellular location is the cytoplasm. The catalysed reaction is tRNA(Tyr) + L-tyrosine + ATP = L-tyrosyl-tRNA(Tyr) + AMP + diphosphate + H(+). Catalyzes the attachment of tyrosine to tRNA(Tyr) in a two-step reaction: tyrosine is first activated by ATP to form Tyr-AMP and then transferred to the acceptor end of tRNA(Tyr). In Methanosarcina acetivorans (strain ATCC 35395 / DSM 2834 / JCM 12185 / C2A), this protein is Tyrosine--tRNA ligase.